We begin with the raw amino-acid sequence, 348 residues long: NADH-ubiquinone oxidoreductase chain 2 (348 aa).

11 consecutive transmembrane segments (helical) span residues 3-23, 25-45, 60-80, 99-119, 122-142, 150-170, 178-196, 200-219, 246-266, 274-294, and 328-348; these read PYVL…TFAS, HWLL…RLMA, FLTQ…NAWA, MMAL…PEVL, LDLT…FALI, NPML…WGGL, ILAY…ILQY, LTLI…FLSL, LTLL…KWLI, DLPA…YFYL, and LMMI…ALFF.

Belongs to the complex I subunit 2 family.

Its subcellular location is the mitochondrion inner membrane. The catalysed reaction is a ubiquinone + NADH + 5 H(+)(in) = a ubiquinol + NAD(+) + 4 H(+)(out). Core subunit of the mitochondrial membrane respiratory chain NADH dehydrogenase (Complex I) that is believed to belong to the minimal assembly required for catalysis. Complex I functions in the transfer of electrons from NADH to the respiratory chain. The immediate electron acceptor for the enzyme is believed to be ubiquinone. The chain is NADH-ubiquinone oxidoreductase chain 2 (MT-ND2) from Formosania lacustris (Oriental stream loach).